Consider the following 353-residue polypeptide: Phospho-N-acetylmuramoyl-pentapeptide-transferase (353 aa).

Helical transmembrane passes span 22 to 42 (FAFF…ITWA), 65 to 85 (TPTM…LFCI), 88 to 108 (DNIF…IGLI), 129 to 149 (LLAQ…SSEL), 161 to 181 (PLFD…ISSS), 192 to 212 (GLAT…LYLS), 228 to 248 (GLGE…GFLW), 256 to 276 (VFMG…LAVI), 281 to 301 (ILLL…ILQV), and 330 to 350 (KIIV…LASI).

This sequence belongs to the glycosyltransferase 4 family. MraY subfamily. Requires Mg(2+) as cofactor.

It is found in the cell inner membrane. The catalysed reaction is UDP-N-acetyl-alpha-D-muramoyl-L-alanyl-gamma-D-glutamyl-meso-2,6-diaminopimeloyl-D-alanyl-D-alanine + di-trans,octa-cis-undecaprenyl phosphate = di-trans,octa-cis-undecaprenyl diphospho-N-acetyl-alpha-D-muramoyl-L-alanyl-D-glutamyl-meso-2,6-diaminopimeloyl-D-alanyl-D-alanine + UMP. The protein operates within cell wall biogenesis; peptidoglycan biosynthesis. In terms of biological role, catalyzes the initial step of the lipid cycle reactions in the biosynthesis of the cell wall peptidoglycan: transfers peptidoglycan precursor phospho-MurNAc-pentapeptide from UDP-MurNAc-pentapeptide onto the lipid carrier undecaprenyl phosphate, yielding undecaprenyl-pyrophosphoryl-MurNAc-pentapeptide, known as lipid I. This chain is Phospho-N-acetylmuramoyl-pentapeptide-transferase, found in Campylobacter jejuni subsp. jejuni serotype O:2 (strain ATCC 700819 / NCTC 11168).